The following is a 267-amino-acid chain: 4-hydroxy-tetrahydrodipicolinate reductase (267 aa).

Residues 8–13 and Glu-34 contribute to the NAD(+) site; that span reads GAAGRM. Arg-35 provides a ligand contact to NADP(+). Residues 98–100 and 122–125 contribute to the NAD(+) site; these read GST and APNM. Residue His-155 is the Proton donor/acceptor of the active site. His-156 lines the (S)-2,3,4,5-tetrahydrodipicolinate pocket. Catalysis depends on Lys-159, which acts as the Proton donor. Position 165-166 (165-166) interacts with (S)-2,3,4,5-tetrahydrodipicolinate; the sequence is GT.

It belongs to the DapB family.

The protein localises to the cytoplasm. The catalysed reaction is (S)-2,3,4,5-tetrahydrodipicolinate + NAD(+) + H2O = (2S,4S)-4-hydroxy-2,3,4,5-tetrahydrodipicolinate + NADH + H(+). It carries out the reaction (S)-2,3,4,5-tetrahydrodipicolinate + NADP(+) + H2O = (2S,4S)-4-hydroxy-2,3,4,5-tetrahydrodipicolinate + NADPH + H(+). Its pathway is amino-acid biosynthesis; L-lysine biosynthesis via DAP pathway; (S)-tetrahydrodipicolinate from L-aspartate: step 4/4. In terms of biological role, catalyzes the conversion of 4-hydroxy-tetrahydrodipicolinate (HTPA) to tetrahydrodipicolinate. The protein is 4-hydroxy-tetrahydrodipicolinate reductase of Pelobacter propionicus (strain DSM 2379 / NBRC 103807 / OttBd1).